The sequence spans 137 residues: Translation initiation factor 2 subunit beta (137 aa).

Belongs to the eIF-2-beta/eIF-5 family. In terms of assembly, heterotrimer composed of an alpha, a beta and a gamma chain.

In terms of biological role, eIF-2 functions in the early steps of protein synthesis by forming a ternary complex with GTP and initiator tRNA. The protein is Translation initiation factor 2 subunit beta (eif2b) of Archaeoglobus fulgidus (strain ATCC 49558 / DSM 4304 / JCM 9628 / NBRC 100126 / VC-16).